Reading from the N-terminus, the 122-residue chain is Small ribosomal subunit protein uS13 (122 aa).

The disordered stretch occupies residues 93-122 (RRGLPVRGQRTKTNARTRKGPKKTIAGKKK).

Belongs to the universal ribosomal protein uS13 family. As to quaternary structure, part of the 30S ribosomal subunit. Forms a loose heterodimer with protein S19. Forms two bridges to the 50S subunit in the 70S ribosome.

Its function is as follows. Located at the top of the head of the 30S subunit, it contacts several helices of the 16S rRNA. In the 70S ribosome it contacts the 23S rRNA (bridge B1a) and protein L5 of the 50S subunit (bridge B1b), connecting the 2 subunits; these bridges are implicated in subunit movement. Contacts the tRNAs in the A and P-sites. This is Small ribosomal subunit protein uS13 from Corynebacterium efficiens (strain DSM 44549 / YS-314 / AJ 12310 / JCM 11189 / NBRC 100395).